A 328-amino-acid polypeptide reads, in one-letter code: Biotin synthase (328 aa).

In terms of domain architecture, Radical SAM core spans 48-275 (NRIQLSKLLN…KSHVRLTAGR (228 aa)). Residues Cys-63, Cys-67, and Cys-70 each contribute to the [4Fe-4S] cluster site. [2Fe-2S] cluster-binding residues include Cys-107, Cys-138, Cys-198, and Arg-270.

This sequence belongs to the radical SAM superfamily. Biotin synthase family. As to quaternary structure, homodimer. It depends on [4Fe-4S] cluster as a cofactor. [2Fe-2S] cluster is required as a cofactor.

The catalysed reaction is (4R,5S)-dethiobiotin + (sulfur carrier)-SH + 2 reduced [2Fe-2S]-[ferredoxin] + 2 S-adenosyl-L-methionine = (sulfur carrier)-H + biotin + 2 5'-deoxyadenosine + 2 L-methionine + 2 oxidized [2Fe-2S]-[ferredoxin]. It participates in cofactor biosynthesis; biotin biosynthesis; biotin from 7,8-diaminononanoate: step 2/2. Catalyzes the conversion of dethiobiotin (DTB) to biotin by the insertion of a sulfur atom into dethiobiotin via a radical-based mechanism. The protein is Biotin synthase of Brucella ovis (strain ATCC 25840 / 63/290 / NCTC 10512).